We begin with the raw amino-acid sequence, 254 residues long: Nickel import ATP-binding protein NikD (254 aa).

Residues 2-241 (PQQIELRNIA…PKHAVTRSLV (240 aa)) enclose the ABC transporter domain. 36 to 43 (GGSGSGKS) is an ATP binding site.

The protein belongs to the ABC transporter superfamily. Nickel importer (TC 3.A.1.5.3) family. In terms of assembly, the complex is composed of two ATP-binding proteins (NikD and NikE), two transmembrane proteins (NikB and NikC) and a solute-binding protein (NikA).

The protein resides in the cell inner membrane. The catalysed reaction is Ni(2+)(out) + ATP + H2O = Ni(2+)(in) + ADP + phosphate + H(+). In terms of biological role, part of the ABC transporter complex NikABCDE involved in nickel import. Responsible for energy coupling to the transport system. This chain is Nickel import ATP-binding protein NikD, found in Escherichia coli (strain UTI89 / UPEC).